A 254-amino-acid chain; its full sequence is Pyridoxine 5'-phosphate synthase (254 aa).

Asparagine 12 serves as a coordination point for 3-amino-2-oxopropyl phosphate. Residue 14–15 (DH) participates in 1-deoxy-D-xylulose 5-phosphate binding. Residue arginine 23 participates in 3-amino-2-oxopropyl phosphate binding. The active-site Proton acceptor is histidine 48. The 1-deoxy-D-xylulose 5-phosphate site is built by arginine 50 and histidine 55. Catalysis depends on glutamate 75, which acts as the Proton acceptor. Threonine 105 is a 1-deoxy-D-xylulose 5-phosphate binding site. Residue histidine 199 is the Proton donor of the active site. 3-amino-2-oxopropyl phosphate is bound by residues glycine 200 and 221–222 (GF).

The protein belongs to the PNP synthase family. In terms of assembly, homooctamer; tetramer of dimers.

It localises to the cytoplasm. The catalysed reaction is 3-amino-2-oxopropyl phosphate + 1-deoxy-D-xylulose 5-phosphate = pyridoxine 5'-phosphate + phosphate + 2 H2O + H(+). The protein operates within cofactor biosynthesis; pyridoxine 5'-phosphate biosynthesis; pyridoxine 5'-phosphate from D-erythrose 4-phosphate: step 5/5. Its function is as follows. Catalyzes the complicated ring closure reaction between the two acyclic compounds 1-deoxy-D-xylulose-5-phosphate (DXP) and 3-amino-2-oxopropyl phosphate (1-amino-acetone-3-phosphate or AAP) to form pyridoxine 5'-phosphate (PNP) and inorganic phosphate. This is Pyridoxine 5'-phosphate synthase from Rhodopseudomonas palustris (strain TIE-1).